Here is a 432-residue protein sequence, read N- to C-terminus: Serine--tRNA ligase (432 aa).

230-232 (TAE) is a binding site for L-serine. 261-263 (RSE) provides a ligand contact to ATP. Glu284 contacts L-serine. 348–351 (EVSS) is a binding site for ATP. Position 383 (Ser383) interacts with L-serine.

Belongs to the class-II aminoacyl-tRNA synthetase family. Type-1 seryl-tRNA synthetase subfamily. As to quaternary structure, homodimer. The tRNA molecule binds across the dimer.

The protein localises to the cytoplasm. It catalyses the reaction tRNA(Ser) + L-serine + ATP = L-seryl-tRNA(Ser) + AMP + diphosphate + H(+). It carries out the reaction tRNA(Sec) + L-serine + ATP = L-seryl-tRNA(Sec) + AMP + diphosphate + H(+). It functions in the pathway aminoacyl-tRNA biosynthesis; selenocysteinyl-tRNA(Sec) biosynthesis; L-seryl-tRNA(Sec) from L-serine and tRNA(Sec): step 1/1. Catalyzes the attachment of serine to tRNA(Ser). Is also able to aminoacylate tRNA(Sec) with serine, to form the misacylated tRNA L-seryl-tRNA(Sec), which will be further converted into selenocysteinyl-tRNA(Sec). This is Serine--tRNA ligase from Limosilactobacillus fermentum (strain NBRC 3956 / LMG 18251) (Lactobacillus fermentum).